The primary structure comprises 185 residues: Ribonuclease M5 (185 aa).

Residues 4-87 (KEIIVVEGKD…AFLPKEEALA (84 aa)) enclose the Toprim domain. 3 residues coordinate Mg(2+): glutamate 10, aspartate 56, and aspartate 58.

This sequence belongs to the ribonuclease M5 family. The cofactor is Mg(2+).

The protein localises to the cytoplasm. The catalysed reaction is Endonucleolytic cleavage of RNA, removing 21 and 42 nucleotides, respectively, from the 5'- and 3'-termini of a 5S-rRNA precursor.. Required for correct processing of both the 5' and 3' ends of 5S rRNA precursor. Cleaves both sides of a double-stranded region yielding mature 5S rRNA in one step. In Bacillus anthracis, this protein is Ribonuclease M5.